The primary structure comprises 285 residues: Inositol oxygenase (285 aa).

Substrate is bound at residue Arg29. Ser33 is modified (phosphoserine). 85 to 87 (DES) serves as a coordination point for substrate. 3 residues coordinate Fe cation: His98, His123, and Asp124. Residues Lys127 and 141-142 (GD) contribute to the substrate site. Fe cation contacts are provided by His194, His220, and Asp253. Position 220 to 221 (220 to 221 (HS)) interacts with substrate.

Belongs to the myo-inositol oxygenase family. It depends on Fe cation as a cofactor. As to expression, kidney specific.

It localises to the cytoplasm. It carries out the reaction myo-inositol + O2 = D-glucuronate + H2O + H(+). It participates in polyol metabolism; myo-inositol degradation into D-glucuronate; D-glucuronate from myo-inositol: step 1/1. The chain is Inositol oxygenase (Miox) from Rattus norvegicus (Rat).